Here is an 82-residue protein sequence, read N- to C-terminus: Sec-independent protein translocase protein TatA (82 aa).

Residues M1 to G21 traverse the membrane as a helical segment. The disordered stretch occupies residues D46 to A82.

It belongs to the TatA/E family. As to quaternary structure, the Tat system comprises two distinct complexes: a TatABC complex, containing multiple copies of TatA, TatB and TatC subunits, and a separate TatA complex, containing only TatA subunits. Substrates initially bind to the TatABC complex, which probably triggers association of the separate TatA complex to form the active translocon.

Its subcellular location is the cell inner membrane. Part of the twin-arginine translocation (Tat) system that transports large folded proteins containing a characteristic twin-arginine motif in their signal peptide across membranes. TatA could form the protein-conducting channel of the Tat system. This chain is Sec-independent protein translocase protein TatA, found in Aliivibrio fischeri (strain MJ11) (Vibrio fischeri).